The primary structure comprises 317 residues: Acetyl-coenzyme A carboxylase carboxyl transferase subunit alpha (317 aa).

The CoA carboxyltransferase C-terminal domain occupies 39–293; it reads KLEAKAQKAL…KEAVVEALGA (255 aa).

The protein belongs to the AccA family. As to quaternary structure, acetyl-CoA carboxylase is a heterohexamer composed of biotin carboxyl carrier protein (AccB), biotin carboxylase (AccC) and two subunits each of ACCase subunit alpha (AccA) and ACCase subunit beta (AccD).

It is found in the cytoplasm. It carries out the reaction N(6)-carboxybiotinyl-L-lysyl-[protein] + acetyl-CoA = N(6)-biotinyl-L-lysyl-[protein] + malonyl-CoA. It participates in lipid metabolism; malonyl-CoA biosynthesis; malonyl-CoA from acetyl-CoA: step 1/1. Component of the acetyl coenzyme A carboxylase (ACC) complex. First, biotin carboxylase catalyzes the carboxylation of biotin on its carrier protein (BCCP) and then the CO(2) group is transferred by the carboxyltransferase to acetyl-CoA to form malonyl-CoA. The sequence is that of Acetyl-coenzyme A carboxylase carboxyl transferase subunit alpha from Beijerinckia indica subsp. indica (strain ATCC 9039 / DSM 1715 / NCIMB 8712).